We begin with the raw amino-acid sequence, 161 residues long: Blue copper protein 1a (161 aa).

The first 23 residues, 1 to 23 (MASSRVVLILSISMVLLSSVAIA), serve as a signal peptide directing secretion. Residues 24–124 (TDHIVGDDKG…QMKLVITVLA (101 aa)) form the Phytocyanin domain. Histidine 64 contacts Cu cation. N-linked (GlcNAc...) asparagine glycosylation is present at asparagine 70. The cysteines at positions 77 and 111 are disulfide-linked. Cu cation contacts are provided by cysteine 105, histidine 110, and methionine 116. Residues 141 to 161 (VVSSLFGVVMAIMVAIAVIFA) form a helical membrane-spanning segment.

Its subcellular location is the membrane. This is Blue copper protein 1a from Medicago truncatula (Barrel medic).